We begin with the raw amino-acid sequence, 218 residues long: Molybdenum cofactor guanylyltransferase (218 aa).

GTP is bound by residues 16–18 (LAG), Lys28, Asn56, Asp74, and Asp109. Asp109 provides a ligand contact to Mg(2+).

The protein belongs to the MobA family. Monomer. Requires Mg(2+) as cofactor.

Its subcellular location is the cytoplasm. It catalyses the reaction Mo-molybdopterin + GTP + H(+) = Mo-molybdopterin guanine dinucleotide + diphosphate. Its function is as follows. Transfers a GMP moiety from GTP to Mo-molybdopterin (Mo-MPT) cofactor (Moco or molybdenum cofactor) to form Mo-molybdopterin guanine dinucleotide (Mo-MGD) cofactor. The protein is Molybdenum cofactor guanylyltransferase of Sinorhizobium fredii (strain NBRC 101917 / NGR234).